The following is a 352-amino-acid chain: uncharacterized protein (352 aa).

Residues 1 to 22 form the signal peptide; that stretch reads MAIYLDKLKMPIIIGLIVLIIA.

Belongs to the bacterial solute-binding protein 1 family. WtpA subfamily.

This is an uncharacterized protein from Staphylothermus marinus (strain ATCC 43588 / DSM 3639 / JCM 9404 / F1).